The chain runs to 443 residues: Putative rhamnogalacturonase D (443 aa).

The first 16 residues, 1–16 (MLVTSLIALLPAIAAA), serve as a signal peptide directing secretion. A disulfide bridge links cysteine 37 with cysteine 63. Residues asparagine 47, asparagine 103, asparagine 124, and asparagine 152 are each glycosylated (N-linked (GlcNAc...) asparagine). The active-site Proton donor is the aspartate 215. Cysteine 217 and cysteine 234 are oxidised to a cystine. N-linked (GlcNAc...) asparagine glycans are attached at residues asparagine 235, asparagine 250, asparagine 263, asparagine 276, and asparagine 281. An intrachain disulfide couples cysteine 338 to cysteine 344. An N-linked (GlcNAc...) asparagine glycan is attached at asparagine 346. A disulfide bridge connects residues cysteine 366 and cysteine 375. Asparagine 380 is a glycosylation site (N-linked (GlcNAc...) asparagine).

This sequence belongs to the glycosyl hydrolase 28 family.

It localises to the secreted. Functionally, pectinolytic enzymes consist of four classes of enzymes: pectine lyase, polygalacturonase, pectin methylesterase and rhamnogalacturonase. Hydrolyzes alpha-D-galacturonopyranosyl-(1,2)-alpha-L-rhamnopyranosyl linkages in the backbone of the hairy regions of pectins. In Aspergillus niger (strain ATCC MYA-4892 / CBS 513.88 / FGSC A1513), this protein is Putative rhamnogalacturonase D (rhgD).